Here is a 1323-residue protein sequence, read N- to C-terminus: Regulatory protein ADR1 (1323 aa).

Ser54 bears the Phosphoserine mark. 2 C2H2-type zinc fingers span residues 104 to 126 and 132 to 155; these read FVCE…YRSH and YPCG…QKIH. The tract at residues 175 to 216 is disordered; it reads KARKNSASSVKFQTPTYGTPDNGNFLNRTTANTRRKASPEAN. Polar residues predominate over residues 179–206; it reads NSASSVKFQTPTYGTPDNGNFLNRTTAN. Thr188 and Thr193 each carry phosphothreonine. Ser230 carries the phosphoserine; by PKA; in vitro modification. Residue Ser258 is modified to Phosphoserine. Residue Thr259 is modified to Phosphothreonine. Phosphoserine occurs at positions 299, 323, and 325. The residue at position 327 (Thr327) is a Phosphothreonine.

In terms of processing, phosphorylation at Ser-230 by cAMP-dependent protein kinase A does not affect DNA binding but appears to prevent transcription of ADH2 during glucose repression.

It is found in the nucleus. Functionally, required for transcriptional activation of glucose-repressible alcohol dehydrogenase (ADH2). This chain is Regulatory protein ADR1 (ADR1), found in Saccharomyces cerevisiae (strain ATCC 204508 / S288c) (Baker's yeast).